Here is a 135-residue protein sequence, read N- to C-terminus: Transcriptional activator protein (135 aa).

Residues 17–32 (KIQHHIAKKRQVRRRR) carry the Nuclear localization signal motif. A zinc finger lies at 37 to 54 (CGCSYYIHLDCINHGFTH). The interval 120-135 (HLDDLTVSDWSFFKSL) is transactivation.

The protein belongs to the geminiviridae transcriptional activator protein family. Monomer. Homodimer. Homooligomer. Self-interaction correlates with nuclear localization and efficient activation of transcription. Monomers suppress local silencing by interacting with and inactivating host adenosine kinase 2 (ADK2) in the cytoplasm. Interacts with and inhibits host SNF1 kinase. Binds to ssDNA. Post-translationally, phosphorylated.

It localises to the host nucleus. Its subcellular location is the host cytoplasm. In terms of biological role, strong activator of the late viral genes promoters. Acts as a suppressor of RNA-mediated gene silencing, also known as post-transcriptional gene silencing (PTGS), a mechanism of plant viral defense that limits the accumulation of viral RNAs. TrAP suppresses the host RNA silencing by inhibiting adenosine kinase 2 (ADK2), a kinase involved in a general methylation pathway. Also suppresses the host basal defense by interacting with and inhibiting SNF1 kinase, a key regulator of cell metabolism implicated in innate antiviral defense. Determines pathogenicity. The polypeptide is Transcriptional activator protein (Tomato yellow leaf curl Sardinia virus (isolate Spain-2) (TYLCSV)).